The following is a 565-amino-acid chain: UvrABC system protein C (565 aa).

The GIY-YIG domain occupies Glu-12–Val-89. In terms of domain architecture, UVR spans Lys-195–Ile-230.

Belongs to the UvrC family. In terms of assembly, interacts with UvrB in an incision complex.

It localises to the cytoplasm. Its function is as follows. The UvrABC repair system catalyzes the recognition and processing of DNA lesions. UvrC both incises the 5' and 3' sides of the lesion. The N-terminal half is responsible for the 3' incision and the C-terminal half is responsible for the 5' incision. In Hydrogenobaculum sp. (strain Y04AAS1), this protein is UvrABC system protein C.